The chain runs to 275 residues: Undecaprenyl-diphosphatase 2 (275 aa).

The next 7 helical transmembrane spans lie at 48–68, 90–110, 117–137, 154–174, 195–215, 223–243, and 254–274; these read NAYVFKIVIQLGSILAVALLF, GLTLGKVAVGLLPAAVLGLLF, IFHVRTVAFALIAGAFLMIAA, ISYKQALAIGLFQCLALWPGF, ANFTFIMAIPIMVGASALSLI, ISLLPFYATGFISAFLVSLVV, and IKLVPFALYRIALGLLLLFLF.

This sequence belongs to the UppP family.

The protein resides in the cell membrane. It catalyses the reaction di-trans,octa-cis-undecaprenyl diphosphate + H2O = di-trans,octa-cis-undecaprenyl phosphate + phosphate + H(+). Catalyzes the dephosphorylation of undecaprenyl diphosphate (UPP). Confers resistance to bacitracin. This is Undecaprenyl-diphosphatase 2 from Shouchella clausii (strain KSM-K16) (Alkalihalobacillus clausii).